The following is a 256-amino-acid chain: Gramicidin S biosynthesis protein GrsT (256 aa).

Serine 95 is an active-site residue.

It belongs to the thioesterase family.

It functions in the pathway antibiotic biosynthesis; gramicidin S biosynthesis. In terms of biological role, probable thioesterase involved in the biosynthesis of gramicidin S. This Aneurinibacillus migulanus (Bacillus migulanus) protein is Gramicidin S biosynthesis protein GrsT (grsT).